Here is a 455-residue protein sequence, read N- to C-terminus: tRNA-2-methylthio-N(6)-dimethylallyladenosine synthase (455 aa).

The MTTase N-terminal domain occupies 3–117; that stretch reads KGLYIESYGC…LPELIMKATR (115 aa). 6 residues coordinate [4Fe-4S] cluster: C12, C48, C80, C155, C159, and C162. Residues 141 to 375 enclose the Radical SAM core domain; that stretch reads VSRGVSAFVS…LLTQQRLFTK (235 aa).

This sequence belongs to the methylthiotransferase family. MiaB subfamily. As to quaternary structure, monomer. The cofactor is [4Fe-4S] cluster.

It localises to the cytoplasm. The catalysed reaction is N(6)-dimethylallyladenosine(37) in tRNA + (sulfur carrier)-SH + AH2 + 2 S-adenosyl-L-methionine = 2-methylsulfanyl-N(6)-dimethylallyladenosine(37) in tRNA + (sulfur carrier)-H + 5'-deoxyadenosine + L-methionine + A + S-adenosyl-L-homocysteine + 2 H(+). Functionally, catalyzes the methylthiolation of N6-(dimethylallyl)adenosine (i(6)A), leading to the formation of 2-methylthio-N6-(dimethylallyl)adenosine (ms(2)i(6)A) at position 37 in tRNAs that read codons beginning with uridine. This chain is tRNA-2-methylthio-N(6)-dimethylallyladenosine synthase, found in Anaplasma marginale (strain St. Maries).